A 145-amino-acid polypeptide reads, in one-letter code: Bacilliredoxin BH2759 (145 aa).

It belongs to the bacilliredoxin family.

In Halalkalibacterium halodurans (strain ATCC BAA-125 / DSM 18197 / FERM 7344 / JCM 9153 / C-125) (Bacillus halodurans), this protein is Bacilliredoxin BH2759.